Here is a 2592-residue protein sequence, read N- to C-terminus: 6-hydroxymellein synthase cdmE (2592 aa).

The span at 1–11 shows a compositional bias: basic and acidic residues; the sequence is MVLHPSDRRFP. Positions 1 to 25 are disordered; the sequence is MVLHPSDRRFPETNGVGGHSKDSSA. The 425-residue stretch at 32–456 folds into the Ketosynthase family 3 (KS3) domain; it reads LEPLAIVGFA…GTNAHVVLES (425 aa). Catalysis depends on for beta-ketoacyl synthase activity residues Cys205, His340, and His379. Residues 589–910 are malonyl-CoA:ACP transacylase (MAT) domain; it reads VFTGQGAQWP…RYSHTITRKK (322 aa). The tract at residues 978-1113 is N-terminal hotdog fold; that stretch reads HELLGSPDPD…GFIESKCESD (136 aa). A dehydratase (DH) domain region spans residues 978–1291; the sequence is HELLGSPDPD…IRGTELCLLS (314 aa). Positions 978–1296 constitute a PKS/mFAS DH domain; sequence HELLGSPDPD…LCLLSAGRGD (319 aa). Residues 1140–1296 are C-terminal hotdog fold; it reads TQIGSISAFY…LCLLSAGRGD (157 aa). S-adenosyl-L-methionine-binding residues include Ile1462 and Glu1484. The interval 1483–1591 is methyltransferase (CMeT) domain; that stretch reads LEIGTGFGSV…HSLLKPGGKL (109 aa). The interval 1887–2199 is enoyl reductase (ER) domain; the sequence is GLLVWSDDEA…NDSNMDTAVI (313 aa). Residues 2223-2398 are ketoreductase (KR) domain; sequence ATYVIAGGLG…IPGMSVNLGN (176 aa). The region spanning 2509 to 2586 is the Carrier domain; that stretch reads VAASHVTEAI…GLSEKIARQS (78 aa). The residue at position 2546 (Ser2546) is an O-(pantetheine 4'-phosphoryl)serine.

The catalysed reaction is 5 malonyl-CoA + AH2 + 5 H(+) = 6-hydroxymellein + A + 5 CO2 + 5 CoA + H2O. Its pathway is secondary metabolite biosynthesis; terpenoid biosynthesis. Highly reducing polyketide synthase; part of the gene cluster that mediates the biosynthesis of chrodrimanin B, a meroterpenoid that acts as a potent blocker of insect GABA-gated chloride channels. The first step of the pathway is the biosynthesis of 6-hydroxymellein by the polyketide synthase cdmE. The prenyltransferase cdmH acts as a 6-hydroxymellein 5-farnesyltransferase and produces the hydrophobic metabolite verruculide C. The FAD-dependent monooxygenase cdmI further converts verruculide C into verruculide B. The terpene cyclase cdmG then produced the pentacyclic molecule 3-hydroxypentacecilide A, the backbone structure of chrodrimanin B, via folding the farnesyl moiety of the substrate into the chair-boat conformation. The short-chain dehydrogenase/reductase cdmF functions as the 3-OH dehydrogenase that oxidizes the C-3 hydroxyl group of 3-hydroxypentacecilide A and produces chrodrimanin C, the dehydrogenated product of 3-hydroxypentacecilide A. The cytochrome P450 monooxygenase cdmJ then accepts both 3-hydroxypentacecilide A and chrodrimanin C and functions as a C-7-beta-hydroxylase to produce respectively chrodrimanin H and chrodrimanin F. The dioxygenase cdmA accepts chrodrimanin H to afford chrodrimanin E, which is further transformed to chrodrimanin A by the dioxygenase cdmD. CdmA can also accept chrodrimanin C as substrate to convert it into verruculide A, which is further converted into chrodrimanin T by cdmD. The last step of the biosynthesis is proposed to be performed by the acetyltransferase cdmC which acetylates chrodrimanin A to yield chrodrimanin B. The pathway may also lead to the production of additional shunt products, including chrodrimanins T and U. The sequence is that of 6-hydroxymellein synthase cdmE from Talaromyces verruculosus (Penicillium verruculosum).